The chain runs to 256 residues: MIKAVKMNTSFDKEKVRKHLPGAIFLSLVVITSLWLVISTISWMTDEDRLPLSHMIIQGQLKHITADDIREAIDSMDSIGTFMTQDVNKLQDALLSLPWIAQVSVRKQWPETIKVFVVEHQPEATWNNRVIVNPEGVVFNAPMSDLREPKPALFGPETSSKDVLDFWHQLQKQFEPIHVTVHSVALTERLSWQVVLDNGIRLELGRDSREERVERFIALYKQLESKKDSIDYIDLRYDTGAAVGWKSDDVENKEEN.

Residues 1–23 lie on the Cytoplasmic side of the membrane; sequence MIKAVKMNTSFDKEKVRKHLPGA. Residues 24–44 form a helical membrane-spanning segment; that stretch reads IFLSLVVITSLWLVISTISWM. Residues 45-256 lie on the Periplasmic side of the membrane; that stretch reads TDEDRLPLSH…SDDVENKEEN (212 aa). The POTRA domain occupies 50–120; that stretch reads LPLSHMIIQG…ETIKVFVVEH (71 aa).

This sequence belongs to the FtsQ/DivIB family. FtsQ subfamily. As to quaternary structure, part of a complex composed of FtsB, FtsL and FtsQ.

Its subcellular location is the cell inner membrane. Essential cell division protein. May link together the upstream cell division proteins, which are predominantly cytoplasmic, with the downstream cell division proteins, which are predominantly periplasmic. May control correct divisome assembly. The sequence is that of Cell division protein FtsQ from Aliivibrio fischeri (strain ATCC 700601 / ES114) (Vibrio fischeri).